We begin with the raw amino-acid sequence, 256 residues long: Hemin import ATP-binding protein HmuV (256 aa).

Residues 2 to 238 (ISAQNLVYSL…QELTMLYGAD (237 aa)) enclose the ABC transporter domain. 34–41 (GPNGAGKS) lines the ATP pocket.

This sequence belongs to the ABC transporter superfamily. Heme (hemin) importer (TC 3.A.1.14.5) family. In terms of assembly, the complex is composed of two ATP-binding proteins (HmuV), two transmembrane proteins (HmuU) and a solute-binding protein (HmuT).

It is found in the cell inner membrane. In terms of biological role, part of the ABC transporter complex HmuTUV involved in hemin import. Responsible for energy coupling to the transport system. This is Hemin import ATP-binding protein HmuV from Shigella dysenteriae.